The following is a 321-amino-acid chain: DNA-directed RNA polymerase subunit alpha (321 aa).

The interval 1–235 (MAYQIECLET…DLFSPLKEVP (235 aa)) is alpha N-terminal domain (alpha-NTD). Residues 252-321 (QIPIEQLNLS…TLPPQKAARN (70 aa)) are alpha C-terminal domain (alpha-CTD).

It belongs to the RNA polymerase alpha chain family. In terms of assembly, homodimer. In cyanobacteria the RNAP catalytic core is composed of 2 alpha, 1 beta, 1 beta', 1 gamma and 1 omega subunit. When a sigma factor is associated with the core the holoenzyme is formed, which can initiate transcription.

It catalyses the reaction RNA(n) + a ribonucleoside 5'-triphosphate = RNA(n+1) + diphosphate. Functionally, DNA-dependent RNA polymerase catalyzes the transcription of DNA into RNA using the four ribonucleoside triphosphates as substrates. This is DNA-directed RNA polymerase subunit alpha from Thermosynechococcus vestitus (strain NIES-2133 / IAM M-273 / BP-1).